The following is a 317-amino-acid chain: MESTIPAKPDFSNKVFAKDERFWLNYLEGRPTAPKSFFDRIYRYHEEHRGHFGTVHDVGAGNGPYAKELRLKFSHVIVSDIAAENVTLAQERLGNDGFQYRVSRLEDADDIPPGSVDMVFATNVLHFCDQDVAMRALARQLRPGGTFACASFGSAYFADEKVQEIYTRIGRAGARLLLKTLDDPERLLRAMDRTDGTYNVAPLDEKLFMPGAQRVDLNMPERGMLSPLPPEMEVTERDESHTRPSDVLIQEEEDEWKFSMNIGQIKAHIESFPFGKDVATELSPLWREMENLVQDRRIDGHWPAKIILATRADASVE.

A methyltransferase domain region spans residues 57-149 (DVGAGNGPYA…QLRPGGTFAC (93 aa)).

The protein belongs to the methyltransferase superfamily.

It functions in the pathway pigment biosynthesis. Functionally, methyltransferase; part of the ergochrome gene cluster responsible for the typical purple-black color of the ergot sclerotia. The ergochrome gene cluster produces several ergot pigments including the yellow ergochrome secalonic acid and its derivatives, as well as the red anthraquinones endocrocin and clavorubin. The pathway begins with the synthesis of atrochrysone thioester by the polyketide synthase (PKS) CPUR_05437. The atrochrysone carboxyl ACP thioesterase CPUR_05436 then breaks the thioester bond and releases the atrochrysone carboxylic acid from CPUR_05437. The atrochrysone carboxylic acid is then converted to atrochrysone which is further transformed into emodin anthrone. The next step is performed by the anthrone oxygenase CPUR_05434 that catalyzes the oxidation of emodinanthrone to emodin. Emodin is further modified to yield monodictyphenone via several steps involving CPUR_05427, CPUR_05428, CPUR_05429 and CPUR_05430. The short chain dehydrogenase/reductase CPUR_05418 then catalyzes the C-5 ketoreduction to give the xanthone skeleton of the monomeric units. Ergochromes formation requires further dimerization steps of different xanthone units, probably catalyzed by the cytochrome P450 monooxygenase CPUR_05419. CPUR_05425, CPUR_05426 and CPUR_05431 are unique to Claviceps, thus it is likely that they are involved in further modification of xanthone units or in their dimerization. The yellow ergochromes and the red anthraquinone pigments endocrocin and clavorubin are products from the same PKS derived precursors and the latter are likely shunt products in the pathway of xanthone biosynthesis. It is proposed that atrochrysone carboxylic acid released from the PKS CPUR_05437 can also be converted to endocrocin anthrone which is further oxidized into endocrocin by CPUR_05435. Endocrocin could be then modified to clavorubin, possibly by CPUR_05423 and CPUR_05431. Clavorubin is the principal anthraquinone metabolite produced by the cluster with a much higher yield compared to endocrocin. This is Methyltransferase CPUR_05424 from Claviceps purpurea (strain 20.1) (Ergot fungus).